The chain runs to 149 residues: Secreted RxLR effector protein 3 (149 aa).

The signal sequence occupies residues 1–23 (MRASTILFVLGAAILAVIGVTTA). Positions 38–53 (RLLRSGSMEQEPDEER) match the RxLR-dEER motif.

Belongs to the RxLR effector family.

It localises to the secreted. Its subcellular location is the host nucleus. The protein localises to the host cytoplasm. Secreted effector that completely suppresses the host cell death induced by cell death-inducing proteins. The sequence is that of Secreted RxLR effector protein 3 from Plasmopara viticola (Downy mildew of grapevine).